The following is a 150-amino-acid chain: PTS system galactitol-specific EIIA component (150 aa).

The 144-residue stretch at 1–144 (MTNLFVRSGI…TQLKEYFTKY (144 aa)) folds into the PTS EIIA type-2 domain. The active-site Tele-phosphohistidine intermediate is His62. His62 carries the phosphohistidine; by HPr modification.

In terms of assembly, forms a complex with one each of subunit of GatA, GatB and 2 subunits of GatC.

The protein resides in the cytoplasm. The phosphoenolpyruvate-dependent sugar phosphotransferase system (sugar PTS), a major carbohydrate active transport system, catalyzes the phosphorylation of incoming sugar substrates concomitantly with their translocation across the cell membrane. The enzyme II complex composed of GatA, GatB and GatC is involved in galactitol transport. The polypeptide is PTS system galactitol-specific EIIA component (gatA) (Escherichia coli O157:H7).